A 95-amino-acid chain; its full sequence is Protein TusB (95 aa).

Belongs to the DsrH/TusB family. As to quaternary structure, heterohexamer, formed by a dimer of trimers. The hexameric TusBCD complex contains 2 copies each of TusB, TusC and TusD. The TusBCD complex interacts with TusE.

The protein resides in the cytoplasm. Functionally, part of a sulfur-relay system required for 2-thiolation of 5-methylaminomethyl-2-thiouridine (mnm(5)s(2)U) at tRNA wobble positions. The polypeptide is Protein TusB (Buchnera aphidicola subsp. Schizaphis graminum (strain Sg)).